A 237-amino-acid polypeptide reads, in one-letter code: Large ribosomal subunit protein uL1 (237 aa).

This sequence belongs to the universal ribosomal protein uL1 family. As to quaternary structure, part of the 50S ribosomal subunit.

Binds directly to 23S rRNA. The L1 stalk is quite mobile in the ribosome, and is involved in E site tRNA release. Functionally, protein L1 is also a translational repressor protein, it controls the translation of the L11 operon by binding to its mRNA. This is Large ribosomal subunit protein uL1 from Synechococcus sp. (strain ATCC 27144 / PCC 6301 / SAUG 1402/1) (Anacystis nidulans).